The sequence spans 98 residues: Integration host factor subunit alpha (98 aa).

The disordered stretch occupies residues 54-74; that stretch reads LRDKASRPGRNPKTGENIPVS.

The protein belongs to the bacterial histone-like protein family. As to quaternary structure, heterodimer of an alpha and a beta chain.

Functionally, this protein is one of the two subunits of integration host factor, a specific DNA-binding protein that functions in genetic recombination as well as in transcriptional and translational control. This Actinobacillus succinogenes (strain ATCC 55618 / DSM 22257 / CCUG 43843 / 130Z) protein is Integration host factor subunit alpha.